Consider the following 199-residue polypeptide: dITP/XTP pyrophosphatase (199 aa).

Substrate is bound at residue 7 to 12; the sequence is TGNAGK. The Proton acceptor role is filled by Asp68. Residue Asp68 coordinates Mg(2+). Substrate-binding positions include Ser69, 153–156, Lys176, and 181–182; these read FGYD and HR.

The protein belongs to the HAM1 NTPase family. Homodimer. The cofactor is Mg(2+).

The enzyme catalyses XTP + H2O = XMP + diphosphate + H(+). It catalyses the reaction dITP + H2O = dIMP + diphosphate + H(+). The catalysed reaction is ITP + H2O = IMP + diphosphate + H(+). In terms of biological role, pyrophosphatase that catalyzes the hydrolysis of nucleoside triphosphates to their monophosphate derivatives, with a high preference for the non-canonical purine nucleotides XTP (xanthosine triphosphate), dITP (deoxyinosine triphosphate) and ITP. Seems to function as a house-cleaning enzyme that removes non-canonical purine nucleotides from the nucleotide pool, thus preventing their incorporation into DNA/RNA and avoiding chromosomal lesions. The polypeptide is dITP/XTP pyrophosphatase (Halorhodospira halophila (strain DSM 244 / SL1) (Ectothiorhodospira halophila (strain DSM 244 / SL1))).